Reading from the N-terminus, the 78-residue chain is Beta-defensin 135 (78 aa).

A signal peptide spans 1–24 (MATRSVLLALVVLNLLFYVPPGRS). 2 cysteine pairs are disulfide-bonded: Cys-37-Cys-64 and Cys-48-Cys-66.

It belongs to the beta-defensin family.

It is found in the secreted. Its function is as follows. Has antibacterial activity. This Pan troglodytes (Chimpanzee) protein is Beta-defensin 135 (DEFB135).